The chain runs to 91 residues: Small ribosomal subunit protein uS15 (91 aa).

This sequence belongs to the universal ribosomal protein uS15 family. As to quaternary structure, part of the 30S ribosomal subunit. Forms a bridge to the 50S subunit in the 70S ribosome, contacting the 23S rRNA.

In terms of biological role, one of the primary rRNA binding proteins, it binds directly to 16S rRNA where it helps nucleate assembly of the platform of the 30S subunit by binding and bridging several RNA helices of the 16S rRNA. Its function is as follows. Forms an intersubunit bridge (bridge B4) with the 23S rRNA of the 50S subunit in the ribosome. This Amoebophilus asiaticus (strain 5a2) protein is Small ribosomal subunit protein uS15.